We begin with the raw amino-acid sequence, 258 residues long: MNFSLEGRNIVVMGVANKRSIAWGIARSLHEAGARLIFTYAGERLEKSVHELAGTLDRNDSIILPCDVTNDAEIETCFASIKEQVGVIHGIAHCIAFANKEELVGEYLNTNRDGFLLAHNISSYSLTAVVKAARPMMTEGGSIVTLTYLGGELVMPNYNVMGVAKASLDASVKYLAADLGKENIRVNSISAGPIRTLSAKGISDFNSILKDIEERAPLRRTTTPEEVGDTAAFLFSDMSRGITGENLHVDSGFHITAR.

Residues Gly14, 20–21, 67–68, and Ile95 contribute to the NAD(+) site; these read SI and DV. A substrate-binding site is contributed by Ala98. Catalysis depends on proton acceptor residues Tyr148 and Tyr158. Residues Lys165 and 194–198 contribute to the NAD(+) site; that span reads IRTLS.

This sequence belongs to the short-chain dehydrogenases/reductases (SDR) family. FabI subfamily. In terms of assembly, homotetramer.

The enzyme catalyses a 2,3-saturated acyl-[ACP] + NAD(+) = a (2E)-enoyl-[ACP] + NADH + H(+). It carries out the reaction (2E)-butenoyl-[ACP] + NADH + H(+) = butanoyl-[ACP] + NAD(+). It participates in lipid metabolism; fatty acid biosynthesis. Its activity is regulated as follows. Inhibited by triclosan and acrylamide. Functionally, catalyzes the reduction of a carbon-carbon double bond in an enoyl moiety that is covalently linked to an acyl carrier protein (ACP). Involved in the elongation cycle of fatty acid which are used in the lipid metabolism. This Bacillus subtilis (strain 168) protein is Enoyl-[acyl-carrier-protein] reductase [NADH] FabI (fabI).